We begin with the raw amino-acid sequence, 112 residues long: Putative movement protein (112 aa).

Residues 27-47 (IGIIMLCIVGIVVLWVLIILC) traverse the membrane as a helical segment. The interval 77–112 (TGTPFEETGPHRERRWAERRTEATNQNNNDNVNRFS) is disordered. A compositionally biased stretch (basic and acidic residues) spans 84–98 (TGPHRERRWAERRTE). Residues 101–112 (NQNNNDNVNRFS) show a composition bias toward polar residues.

Belongs to the nanovirus movement protein family.

Its subcellular location is the host cell membrane. May transport viral genome to neighboring plant cells directly through plasmosdesmata, without any budding. The movement protein allows efficient cell to cell propagation, by bypassing the host cell wall barrier. The polypeptide is Putative movement protein (DNA-M) (Subterranean clover stunt virus (strain F) (SCSV)).